The primary structure comprises 151 residues: Transcriptional regulator MraZ (151 aa).

SpoVT-AbrB domains lie at 5–52 (IHQV…PLSE) and 81–124 (ATDL…SQEE).

The protein belongs to the MraZ family. Forms oligomers.

The protein localises to the cytoplasm. It is found in the nucleoid. In Marinomonas sp. (strain MWYL1), this protein is Transcriptional regulator MraZ.